A 274-amino-acid polypeptide reads, in one-letter code: Octanoyltransferase LipM (274 aa).

Residues 32–244 (GEVPPTLRFY…GFARALGLTL (213 aa)) form the BPL/LPL catalytic domain. Cys-146 acts as the Acyl-thioester intermediate in catalysis.

Belongs to the octanoyltransferase LipM family. As to quaternary structure, monomer.

The catalysed reaction is octanoyl-[ACP] + L-lysyl-[protein] = N(6)-octanoyl-L-lysyl-[protein] + holo-[ACP] + H(+). It functions in the pathway protein modification; protein lipoylation via endogenous pathway; protein N(6)-(lipoyl)lysine from octanoyl-[acyl-carrier-protein]. In terms of biological role, catalyzes the transfer of endogenously produced octanoic acid from octanoyl-acyl-carrier-protein onto the lipoyl domain of GcvH, an intermediate carrier during protein lipoylation. The chain is Octanoyltransferase LipM from Symbiobacterium thermophilum (strain DSM 24528 / JCM 14929 / IAM 14863 / T).